Reading from the N-terminus, the 242-residue chain is Host range factor p28 (242 aa).

The KilA-N domain occupies 21–131 (YIDEPNDIRL…QSILRGLVNW (111 aa)). An RING-type zinc finger spans residues 173-226 (CGICYEVVYSKRLENDRYFGLLDSCNHIFCITCINIWHRTRRETGALDNCPICR).

Belongs to the orthopoxvirus OPG021 family.

Its subcellular location is the host cytoplasm. It catalyses the reaction S-ubiquitinyl-[E2 ubiquitin-conjugating enzyme]-L-cysteine + [acceptor protein]-L-lysine = [E2 ubiquitin-conjugating enzyme]-L-cysteine + N(6)-ubiquitinyl-[acceptor protein]-L-lysine.. Its function is as follows. RING-finger E3 ubiquitin ligase which catalyzes the formation of both 'Lys-48'- and 'Lys-63'-linked polyubiquitin chains. Plays an important role in virulence by acting as an anti-apoptotic factor. The polypeptide is Host range factor p28 (OPG021) (Cynomys gunnisoni (Gunnison's prairie dog)).